Reading from the N-terminus, the 326-residue chain is Phenylalanine--tRNA ligase alpha subunit (326 aa).

Mg(2+) is bound at residue Glu251.

It belongs to the class-II aminoacyl-tRNA synthetase family. Phe-tRNA synthetase alpha subunit type 1 subfamily. Tetramer of two alpha and two beta subunits. The cofactor is Mg(2+).

The protein resides in the cytoplasm. It carries out the reaction tRNA(Phe) + L-phenylalanine + ATP = L-phenylalanyl-tRNA(Phe) + AMP + diphosphate + H(+). This is Phenylalanine--tRNA ligase alpha subunit from Pseudoalteromonas atlantica (strain T6c / ATCC BAA-1087).